Reading from the N-terminus, the 498-residue chain is ATP synthase subunit beta, chloroplastic (498 aa).

172 to 179 (GGAGVGKT) is a binding site for ATP.

The protein belongs to the ATPase alpha/beta chains family. As to quaternary structure, F-type ATPases have 2 components, CF(1) - the catalytic core - and CF(0) - the membrane proton channel. CF(1) has five subunits: alpha(3), beta(3), gamma(1), delta(1), epsilon(1). CF(0) has four main subunits: a(1), b(1), b'(1) and c(9-12).

It localises to the plastid. The protein localises to the chloroplast thylakoid membrane. The enzyme catalyses ATP + H2O + 4 H(+)(in) = ADP + phosphate + 5 H(+)(out). Its function is as follows. Produces ATP from ADP in the presence of a proton gradient across the membrane. The catalytic sites are hosted primarily by the beta subunits. The sequence is that of ATP synthase subunit beta, chloroplastic from Aspidistra elatior (Cast-iron plant).